Reading from the N-terminus, the 37-residue chain is Large ribosomal subunit protein bL36c (37 aa).

This sequence belongs to the bacterial ribosomal protein bL36 family.

The protein resides in the plastid. It is found in the chloroplast. The protein is Large ribosomal subunit protein bL36c of Cycas taitungensis (Prince sago).